We begin with the raw amino-acid sequence, 138 residues long: Basic phospholipase A2 Tbo-G6D49 (138 aa).

The N-terminal stretch at 1–16 (MRTLWIMAVLLVGVEG) is a signal peptide. Cystine bridges form between Cys42–Cys131, Cys44–Cys60, Cys59–Cys111, Cys65–Cys138, Cys66–Cys104, Cys73–Cys97, and Cys91–Cys102. Residues Tyr43, Gly45, and Gly47 each coordinate Ca(2+). The active site involves His63. Asp64 lines the Ca(2+) pocket. Residue Asp105 is part of the active site.

In terms of assembly, monomer. Requires Ca(2+) as cofactor. In terms of tissue distribution, expressed by the venom gland.

The protein localises to the secreted. The catalysed reaction is a 1,2-diacyl-sn-glycero-3-phosphocholine + H2O = a 1-acyl-sn-glycero-3-phosphocholine + a fatty acid + H(+). Snake venom phospholipase A2 (PLA2) that impairs hemostasis. It weakly inhibits ADP-induced platelet aggregation when tested on platelet rich plasma from human and rabbit blood (15-25% of inhibition at 5-10 ug of enzyme), and dose-dependently inhibits blood coagulation, possibly by inhibiting thrombin activation. Exhibits strong hydrolytic activities toward L-dipalmitoyl phosphatidylcholine. PLA2 catalyzes the calcium-dependent hydrolysis of the 2-acyl groups in 3-sn-phosphoglycerides. This Craspedocephalus borneensis (Borneo pit viper) protein is Basic phospholipase A2 Tbo-G6D49.